The sequence spans 1552 residues: ABC multidrug transporter lscH (1552 aa).

2 consecutive transmembrane segments (helical) span residues 32-52 and 68-88; these read ETILSILPSVLVIVVAPIPII and WFKKISSICFITLSAALVGLW. N-linked (GlcNAc...) asparagine glycosylation occurs at asparagine 91. The next 8 membrane-spanning stretches (helical) occupy residues 100 to 120, 158 to 178, 280 to 300, 311 to 331, 413 to 433, 457 to 477, 500 to 520, and 528 to 548; these read STPSAVLTFVLSLVYVLLSTI, HSAIPPVFASSLALRVVMLLL, LFQIGFTYAQPFLITAAIELA, NGYGLIGAYILVYSGIAVSVG, AACVMSVGFAIVVMVGTVFLA, ALASIKWLKISGLTDVAFSVI, ILSICTPILGPLLTFAVFAGI, and LTIAKVFTAFSIIVLLNSPLA. Positions 280–559 constitute an ABC transmembrane type-1 1 domain; the sequence is LFQIGFTYAQ…IVQALPQISG (280 aa). Positions 573 to 655 are disordered; that stretch reads AEERHDPRST…PDANGDSRDA (83 aa). Residues 581-602 show a composition bias toward polar residues; it reads STTTGTSPESNNGSQQTLSDKQ. The N-linked (GlcNAc...) asparagine glycan is linked to asparagine 592. An ABC transporter 1 domain is found at 639–884; the sequence is GHLADTTPDA…AELGWADRDL (246 aa). Residue 676 to 683 participates in ATP binding; the sequence is GPVGCGKS. Asparagine 719 and asparagine 834 each carry an N-linked (GlcNAc...) asparagine glycan. The span at 887–912 shows a compositional bias: basic and acidic residues; the sequence is QQEKPGKDELNHEHGEYSESAPEKLR. The interval 887 to 917 is disordered; the sequence is QQEKPGKDELNHEHGEYSESAPEKLRRSQTN. A run of 2 helical transmembrane segments spans residues 957 to 977 and 1005 to 1025; these read GWLTITIFVIAICVYAFCDSF and AVLGVGAVAACLIGTWQLFII. In terms of domain architecture, ABC transmembrane type-1 2 spans 963–1241; that stretch reads IFVIAICVYA…ATITSWVTLE (279 aa). An N-linked (GlcNAc...) asparagine glycan is attached at asparagine 1028. Transmembrane regions (helical) follow at residues 1076 to 1096, 1100 to 1120, 1184 to 1204, and 1210 to 1230; these read AALGVVMALSFGIAQFILVCV, YMAALLPFLLAVLYAIQHFYL, WITFAVNMVIMMLAVILIVLT, and AIGPGYVGIALSNILAFSATM. In terms of domain architecture, ABC transporter 2 spans 1295–1538; sequence IELDNVTASY…PTSIFKELYL (244 aa). Residues asparagine 1299 and asparagine 1313 are each glycosylated (N-linked (GlcNAc...) asparagine). Position 1328-1335 (1328-1335) interacts with ATP; sequence GRTGSGKS.

This sequence belongs to the ABC transporter superfamily. ABCC family. Conjugate transporter (TC 3.A.1.208) subfamily.

It localises to the cell membrane. In terms of biological role, ABC multidrug transporter; part of the gene cluster that mediates the biosynthesis of the lipopeptide antibiotics leucinostatins that show extensive biological activities, including antimalarial, antiviral, antibacterial, antifungal, and antitumor activities, as well as phytotoxic. May be involved in the efflux of leucinostatins. This chain is ABC multidrug transporter lscH, found in Purpureocillium lilacinum (Paecilomyces lilacinus).